Consider the following 299-residue polypeptide: Probable lipid kinase YegS (299 aa).

The DAGKc domain maps to 2–133 (AEFPASLLIL…IDMAQVNKQT (132 aa)). Residues Thr40, 66-72 (GDGTINE), and Thr95 contribute to the ATP site. Residues Leu215, Asp218, and Leu220 each coordinate Mg(2+). The Proton acceptor role is filled by Glu271.

The protein belongs to the diacylglycerol/lipid kinase family. YegS lipid kinase subfamily. The cofactor is Mg(2+). Ca(2+) is required as a cofactor.

The protein localises to the cytoplasm. In terms of biological role, probably phosphorylates lipids; the in vivo substrate is unknown. The protein is Probable lipid kinase YegS of Escherichia coli O6:K15:H31 (strain 536 / UPEC).